The chain runs to 269 residues: MNQMNPAFVMPDVQSTVDTRQIPIQRVGVKAVRHPLTVRTESGDVQPTVGVWNLDVHLPADQKGTHMSRFVALLEDSREPLTVERFRAMLASMLVRLEAEAGRIEVTFPYFVNKTAPVSGVQSLLDYEVTLAGESRNGETRLFLKVLVPVTSLCPCSKKISQYGAHNQRSHVTIDAELAADLPVEALIRIAEEEASCELWGLLKRPDEKFVTERAYENPKFVEDLVRDVAQRLDADERVVAYVLEAENFESIHNHSAYALIERDKRHAA.

This sequence belongs to the GTP cyclohydrolase IV family.

It catalyses the reaction GTP + H2O = 7,8-dihydroneopterin 3'-triphosphate + formate + H(+). It participates in cofactor biosynthesis; 7,8-dihydroneopterin triphosphate biosynthesis; 7,8-dihydroneopterin triphosphate from GTP: step 1/1. Its function is as follows. Converts GTP to 7,8-dihydroneopterin triphosphate. This Burkholderia ambifaria (strain ATCC BAA-244 / DSM 16087 / CCUG 44356 / LMG 19182 / AMMD) (Burkholderia cepacia (strain AMMD)) protein is GTP cyclohydrolase FolE2.